We begin with the raw amino-acid sequence, 230 residues long: MDNNFRCIAFDLGGVLFSAGKEFAKAEWSSYGYDVVLIHDELVSEKAQQLRKGMISDNEFWNIYLKSKVPSNYDVDLIKQAYYRGYILDEDLSNWMKNTLKKPGNNYKLVAFSGNIPSRIQYLEDKYHFRSLFDAEAYSFDCGATKPDNYFIEYLIKICFPQETKDVVLKHGEPLIGQQLSLFQELGKQILYLDDSVKDSAPAKRYNINTFIYERGHINKLFEKYPNLNK.

This is an uncharacterized protein from Dictyostelium discoideum (Social amoeba).